The primary structure comprises 311 residues: Glycine--tRNA ligase alpha subunit (311 aa).

The protein belongs to the class-II aminoacyl-tRNA synthetase family. In terms of assembly, tetramer of two alpha and two beta subunits.

It is found in the cytoplasm. It carries out the reaction tRNA(Gly) + glycine + ATP = glycyl-tRNA(Gly) + AMP + diphosphate. The protein is Glycine--tRNA ligase alpha subunit of Brucella anthropi (strain ATCC 49188 / DSM 6882 / CCUG 24695 / JCM 21032 / LMG 3331 / NBRC 15819 / NCTC 12168 / Alc 37) (Ochrobactrum anthropi).